Consider the following 206-residue polypeptide: Small ribosomal subunit protein uS4 (206 aa).

The region spanning 96–156 is the S4 RNA-binding domain; sequence CRLDNVVYRM…EKSKNQLRIA (61 aa).

The protein belongs to the universal ribosomal protein uS4 family. As to quaternary structure, part of the 30S ribosomal subunit. Contacts protein S5. The interaction surface between S4 and S5 is involved in control of translational fidelity.

Functionally, one of the primary rRNA binding proteins, it binds directly to 16S rRNA where it nucleates assembly of the body of the 30S subunit. In terms of biological role, with S5 and S12 plays an important role in translational accuracy. This chain is Small ribosomal subunit protein uS4, found in Ectopseudomonas mendocina (strain ymp) (Pseudomonas mendocina).